Consider the following 211-residue polypeptide: Envelope glycoprotein (211 aa).

Over 1–151 the chain is Extracellular; it reads QFKRRAKYKR…FNKSPWFTTL (151 aa). Residues 13-33 form a fusion peptide region; the sequence is VSLTLALLLGGLTMGGIAAGV. Coiled coils occupy residues 41–90 and 100–136; these read VATQ…LLFL and KEEC…SQQG. The segment at 79 to 95 is immunosuppression; the sequence is LQNRRGLDLLFLKEGGL. A CX6CC motif is present at residues 96–104; sequence CAALKEECC. A helical membrane pass occupies residues 152-172; that stretch reads ISTIMGPLIILLLILLFGPCI. C171 is lipidated: S-palmitoyl cysteine; by host. At 173–211 the chain is on the cytoplasmic side; sequence LNRLVQFIKDRISVVQALVLTQQYHQLKSIDPEKVESRE. Residues 196–199 carry the YXXL motif; contains endocytosis signal motif; it reads YHQL.

In terms of assembly, the mature envelope protein (Env) consists of a trimer of SU-TM heterodimers attached by a labile interchain disulfide bond. Post-translationally, specific enzymatic cleavages in vivo yield mature proteins. Envelope glycoproteins are synthesized as an inactive precursor that is N-glycosylated and processed likely by host cell furin or by a furin-like protease in the Golgi to yield the mature SU and TM proteins. The cleavage site between SU and TM requires the minimal sequence [KR]-X-[KR]-R. The R-peptide is released from the C-terminus of the cytoplasmic tail of the TM protein upon particle formation as a result of proteolytic cleavage by the viral protease. Cleavage of this peptide is required for TM to become fusogenic. The CXXC motif is highly conserved across a broad range of retroviral envelope proteins. It is thought to participate in the formation of a labile disulfide bond possibly with the CX6CC motif present in the transmembrane protein. Isomerization of the intersubunit disulfide bond to an SU intrachain disulfide bond is thought to occur upon receptor recognition in order to allow membrane fusion. In terms of processing, the transmembrane protein is palmitoylated. Post-translationally, the R-peptide is palmitoylated.

It localises to the virion membrane. Its subcellular location is the host cell membrane. Functionally, the surface protein (SU) attaches the virus to the host cell by binding to its receptor. This interaction triggers the refolding of the transmembrane protein (TM) and is thought to activate its fusogenic potential by unmasking its fusion peptide. Fusion occurs at the host cell plasma membrane. Its function is as follows. The transmembrane protein (TM) acts as a class I viral fusion protein. Under the current model, the protein has at least 3 conformational states: pre-fusion native state, pre-hairpin intermediate state, and post-fusion hairpin state. During viral and target cell membrane fusion, the coiled coil regions (heptad repeats) assume a trimer-of-hairpins structure, positioning the fusion peptide in close proximity to the C-terminal region of the ectodomain. The formation of this structure appears to drive apposition and subsequent fusion of viral and target cell membranes. Membranes fusion leads to delivery of the nucleocapsid into the cytoplasm. This chain is Envelope glycoprotein (env), found in Mus musculus (Mouse).